The primary structure comprises 210 residues: Scoloptoxin SSD976 (210 aa).

Residues 1–23 form the signal peptide; the sequence is MNILLSSTLFVLLMFQIIGSGMG.

Contains 3 disulfide bonds. Expressed by the venom gland.

It localises to the secreted. Voltage-gated calcium channel inhibitor. This Scolopendra dehaani (Thai centipede) protein is Scoloptoxin SSD976.